We begin with the raw amino-acid sequence, 363 residues long: Protein-glutamate methylesterase/protein-glutamine glutaminase of group 3 operon (363 aa).

In terms of domain architecture, Response regulatory spans 7–124 (RVLIVDDSAS…RQALLECSTR (118 aa)). 4-aspartylphosphate is present on aspartate 58. The CheB-type methylesterase domain maps to 166–357 (PTTERIVCIG…REIMLWYQAG (192 aa)). Residues serine 177, histidine 203, and aspartate 299 contribute to the active site.

It belongs to the CheB family. In terms of processing, phosphorylated by CheA. Phosphorylation of the N-terminal regulatory domain activates the methylesterase activity.

It localises to the cytoplasm. The catalysed reaction is [protein]-L-glutamate 5-O-methyl ester + H2O = L-glutamyl-[protein] + methanol + H(+). It catalyses the reaction L-glutaminyl-[protein] + H2O = L-glutamyl-[protein] + NH4(+). Functionally, involved in chemotaxis. Part of a chemotaxis signal transduction system that modulates chemotaxis in response to various stimuli. Catalyzes the demethylation of specific methylglutamate residues introduced into the chemoreceptors (methyl-accepting chemotaxis proteins or MCP) by CheR. Also mediates the irreversible deamidation of specific glutamine residues to glutamic acid. In Bradyrhizobium diazoefficiens (strain JCM 10833 / BCRC 13528 / IAM 13628 / NBRC 14792 / USDA 110), this protein is Protein-glutamate methylesterase/protein-glutamine glutaminase of group 3 operon.